The sequence spans 452 residues: Exodeoxyribonuclease 7 large subunit (452 aa).

The protein belongs to the XseA family. Heterooligomer composed of large and small subunits.

The protein localises to the cytoplasm. It carries out the reaction Exonucleolytic cleavage in either 5'- to 3'- or 3'- to 5'-direction to yield nucleoside 5'-phosphates.. Bidirectionally degrades single-stranded DNA into large acid-insoluble oligonucleotides, which are then degraded further into small acid-soluble oligonucleotides. The polypeptide is Exodeoxyribonuclease 7 large subunit (Bacillus mycoides (strain KBAB4) (Bacillus weihenstephanensis)).